A 482-amino-acid chain; its full sequence is Spore germination protein A1 (482 aa).

6 helical membrane-spanning segments follow: residues valine 242–leucine 262, phenylalanine 284–histidine 304, glutamate 321–leucine 341, proline 351–alanine 371, leucine 373–proline 393, and phenylalanine 406–valine 426.

It belongs to the GerABKA family.

Its subcellular location is the cell membrane. Its function is as follows. Forms a complex at the inner spore membrane which acts as a receptor for L-alanine, thus is involved in the stimulation of germination in response to alanine. Can stimulate germination in the absence of GerD and GerK gene products (fructose and glucose receptors, respectively), but the response is improved in their presence. This Bacillus subtilis (strain 168) protein is Spore germination protein A1 (gerAA).